Here is a 301-residue protein sequence, read N- to C-terminus: Porphobilinogen deaminase (301 aa).

Cys-242 is subject to S-(dipyrrolylmethanemethyl)cysteine.

This sequence belongs to the HMBS family. In terms of assembly, monomer. Requires dipyrromethane as cofactor.

The catalysed reaction is 4 porphobilinogen + H2O = hydroxymethylbilane + 4 NH4(+). It functions in the pathway porphyrin-containing compound metabolism; protoporphyrin-IX biosynthesis; coproporphyrinogen-III from 5-aminolevulinate: step 2/4. Its function is as follows. Tetrapolymerization of the monopyrrole PBG into the hydroxymethylbilane pre-uroporphyrinogen in several discrete steps. This Rickettsia akari (strain Hartford) protein is Porphobilinogen deaminase.